We begin with the raw amino-acid sequence, 309 residues long: UDP-3-O-acyl-N-acetylglucosamine deacetylase (309 aa).

3 residues coordinate Zn(2+): histidine 78, histidine 235, and aspartate 239. Histidine 262 functions as the Proton donor in the catalytic mechanism.

This sequence belongs to the LpxC family. It depends on Zn(2+) as a cofactor.

It catalyses the reaction a UDP-3-O-[(3R)-3-hydroxyacyl]-N-acetyl-alpha-D-glucosamine + H2O = a UDP-3-O-[(3R)-3-hydroxyacyl]-alpha-D-glucosamine + acetate. It participates in glycolipid biosynthesis; lipid IV(A) biosynthesis; lipid IV(A) from (3R)-3-hydroxytetradecanoyl-[acyl-carrier-protein] and UDP-N-acetyl-alpha-D-glucosamine: step 2/6. Functionally, catalyzes the hydrolysis of UDP-3-O-myristoyl-N-acetylglucosamine to form UDP-3-O-myristoylglucosamine and acetate, the committed step in lipid A biosynthesis. The protein is UDP-3-O-acyl-N-acetylglucosamine deacetylase of Syntrophotalea carbinolica (strain DSM 2380 / NBRC 103641 / GraBd1) (Pelobacter carbinolicus).